We begin with the raw amino-acid sequence, 223 residues long: Transmembrane protein 114 (223 aa).

Residues 7-27 form a helical membrane-spanning segment; that stretch reads GLAGAAALTGALSFVLLAAAI. N-linked (GlcNAc...) asparagine glycans are attached at residues Asn-55 and Asn-89. 3 consecutive transmembrane segments (helical) span residues 106 to 126, 134 to 154, and 189 to 209; these read FVIL…TGFL, LLLL…LAGI, and LALG…FLAA.

The protein belongs to the PMP-22/EMP/MP20 family.

The protein resides in the cell junction. The protein localises to the tight junction. It is found in the lateral cell membrane. Its subcellular location is the apical cell membrane. The protein is Transmembrane protein 114 of Homo sapiens (Human).